Here is a 743-residue protein sequence, read N- to C-terminus: Phosphoribosylformylglycinamidine synthase subunit PurL (743 aa).

H50 is an active-site residue. Residues Y53 and K92 each coordinate ATP. Residue E94 coordinates Mg(2+). Substrate is bound by residues 95–98 (SHNH) and R117. The active-site Proton acceptor is the H96. D118 is a Mg(2+) binding site. Q241 contributes to the substrate binding site. Residue D269 participates in Mg(2+) binding. 313–315 (ESQ) contacts substrate. ATP is bound by residues D495 and G532. A Mg(2+)-binding site is contributed by N533. S535 contributes to the substrate binding site.

This sequence belongs to the FGAMS family. As to quaternary structure, monomer. Part of the FGAM synthase complex composed of 1 PurL, 1 PurQ and 2 PurS subunits.

The protein localises to the cytoplasm. The enzyme catalyses N(2)-formyl-N(1)-(5-phospho-beta-D-ribosyl)glycinamide + L-glutamine + ATP + H2O = 2-formamido-N(1)-(5-O-phospho-beta-D-ribosyl)acetamidine + L-glutamate + ADP + phosphate + H(+). It functions in the pathway purine metabolism; IMP biosynthesis via de novo pathway; 5-amino-1-(5-phospho-D-ribosyl)imidazole from N(2)-formyl-N(1)-(5-phospho-D-ribosyl)glycinamide: step 1/2. Its function is as follows. Part of the phosphoribosylformylglycinamidine synthase complex involved in the purines biosynthetic pathway. Catalyzes the ATP-dependent conversion of formylglycinamide ribonucleotide (FGAR) and glutamine to yield formylglycinamidine ribonucleotide (FGAM) and glutamate. The FGAM synthase complex is composed of three subunits. PurQ produces an ammonia molecule by converting glutamine to glutamate. PurL transfers the ammonia molecule to FGAR to form FGAM in an ATP-dependent manner. PurS interacts with PurQ and PurL and is thought to assist in the transfer of the ammonia molecule from PurQ to PurL. This is Phosphoribosylformylglycinamidine synthase subunit PurL from Rhizobium etli (strain CIAT 652).